Here is a 115-residue protein sequence, read N- to C-terminus: Guanylin (115 aa).

The N-terminal stretch at M1–G21 is a signal peptide. Disulfide bonds link C69/C82, C104/C112, and C107/C115.

It belongs to the guanylin family. In terms of tissue distribution, highly expressed in ileum and colon. Found in plasma.

It localises to the secreted. Endogenous activator of intestinal guanylate cyclase. It stimulates this enzyme through the same receptor binding region as the heat-stable enterotoxins. The protein is Guanylin (GUCA2A) of Homo sapiens (Human).